Reading from the N-terminus, the 402-residue chain is Speedy protein E21 (402 aa).

A disordered region spans residues 1–90 (MDRTETRFRK…EPEKELAPEP (90 aa)). A compositionally biased stretch (polar residues) spans 16 to 39 (GKITTSRQLHPQNEQSPQRSTSGY). Acidic residues predominate over residues 76–90 (DESEEEPEKELAPEP).

The protein belongs to the Speedy/Ringo family.

The protein is Speedy protein E21 of Homo sapiens (Human).